Here is a 386-residue protein sequence, read N- to C-terminus: Flap endonuclease 1 (386 aa).

Residues 1–104 form an N-domain region; it reads MGILGLSKLI…GELAKRAERR (104 aa). A Mg(2+)-binding site is contributed by Asp34. DNA-binding residues include Arg47 and Arg70. The Mg(2+) site is built by Asp86, Glu158, Glu160, Asp179, and Asp181. Residues 122 to 253 are I-domain; the sequence is EIEKFNRRLV…KRAIELINNY (132 aa). Glu158 contacts DNA. The DNA site is built by Gly231 and Asp233. Asp233 serves as a coordination point for Mg(2+). The interval 336 to 344 is interaction with PCNA; that stretch reads TQVRLDSFF. Residues 354–386 form a disordered region; the sequence is VNAAKRKAEEAKKSANNKKAKTSGGAARGRRPK.

This sequence belongs to the XPG/RAD2 endonuclease family. FEN1 subfamily. Interacts with PCNA. Three molecules of FEN1 bind to one PCNA trimer with each molecule binding to one PCNA monomer. PCNA stimulates the nuclease activity without altering cleavage specificity. Mg(2+) serves as cofactor. Phosphorylated. Phosphorylation upon DNA damage induces relocalization to the nuclear plasma.

The protein resides in the nucleus. Its subcellular location is the nucleolus. The protein localises to the nucleoplasm. It is found in the mitochondrion. Its function is as follows. Structure-specific nuclease with 5'-flap endonuclease and 5'-3' exonuclease activities involved in DNA replication and repair. During DNA replication, cleaves the 5'-overhanging flap structure that is generated by displacement synthesis when DNA polymerase encounters the 5'-end of a downstream Okazaki fragment. It enters the flap from the 5'-end and then tracks to cleave the flap base, leaving a nick for ligation. Also involved in the long patch base excision repair (LP-BER) pathway, by cleaving within the apurinic/apyrimidinic (AP) site-terminated flap. Acts as a genome stabilization factor that prevents flaps from equilibrating into structures that lead to duplications and deletions. Also possesses 5'-3' exonuclease activity on nicked or gapped double-stranded DNA, and exhibits RNase H activity. Also involved in replication and repair of rDNA and in repairing mitochondrial DNA. The sequence is that of Flap endonuclease 1 from Drosophila pseudoobscura pseudoobscura (Fruit fly).